The primary structure comprises 263 residues: Homeobox protein CDX-1 (263 aa).

The interval 47 to 108 is disordered; the sequence is PGINSDPHHG…VQPPGSGLLP (62 aa). Polar residues predominate over residues 82 to 97; that stretch reads SSANPTQIAFSPSDYN. The segment at residues 150-209 is a DNA-binding region (homeobox); it reads KDKYRVVYTDHQRLELEKEFHYSRYITIRRKAELAAALGLTERQVKIWFQNRRAKERKVN. Residues 153-174 form an interaction with DNA region; the sequence is YRVVYTDHQRLELEKEFHYSRY. Residues 192–203 form an interaction with 5-mCpG DNA region; sequence RQVKIWFQNRRA. Basic residues predominate over residues 204 to 213; that stretch reads KERKVNKKKM. The disordered stretch occupies residues 204 to 263; sequence KERKVNKKKMQQQSQQASTTTPTPPSVGTTAGMGGLCSSSSSNSNLVSPSSMPIKEEYLS. Low complexity-rich tracts occupy residues 214–233 and 241–254; these read QQQS…VGTT and SSSS…SPSS.

This sequence belongs to the Caudal homeobox family.

The protein resides in the nucleus. Plays a role in transcriptional regulation. Involved in activated KRAS-mediated transcriptional activation of PRKD1. Binds to the PRKD1 promoter. Could play a role in the terminal differentiation of the intestine. Binds preferentially to methylated DNA. In Xenopus laevis (African clawed frog), this protein is Homeobox protein CDX-1 (cdx1).